We begin with the raw amino-acid sequence, 271 residues long: tRNA pseudouridine synthase A (271 aa).

Asp54 functions as the Nucleophile in the catalytic mechanism. A substrate-binding site is contributed by Tyr112.

It belongs to the tRNA pseudouridine synthase TruA family. In terms of assembly, homodimer.

It carries out the reaction uridine(38/39/40) in tRNA = pseudouridine(38/39/40) in tRNA. Functionally, formation of pseudouridine at positions 38, 39 and 40 in the anticodon stem and loop of transfer RNAs. This is tRNA pseudouridine synthase A from Acinetobacter baylyi (strain ATCC 33305 / BD413 / ADP1).